The primary structure comprises 624 residues: 1-deoxy-D-xylulose-5-phosphate synthase (624 aa).

Thiamine diphosphate contacts are provided by residues histidine 80 and glycine 121 to serine 123. Aspartate 152 contacts Mg(2+). Thiamine diphosphate-binding positions include glycine 153 to alanine 154, asparagine 181, tyrosine 289, and glutamate 371. Position 181 (asparagine 181) interacts with Mg(2+).

Belongs to the transketolase family. DXPS subfamily. As to quaternary structure, homodimer. Mg(2+) is required as a cofactor. Thiamine diphosphate serves as cofactor.

The enzyme catalyses D-glyceraldehyde 3-phosphate + pyruvate + H(+) = 1-deoxy-D-xylulose 5-phosphate + CO2. It functions in the pathway metabolic intermediate biosynthesis; 1-deoxy-D-xylulose 5-phosphate biosynthesis; 1-deoxy-D-xylulose 5-phosphate from D-glyceraldehyde 3-phosphate and pyruvate: step 1/1. In terms of biological role, catalyzes the acyloin condensation reaction between C atoms 2 and 3 of pyruvate and glyceraldehyde 3-phosphate to yield 1-deoxy-D-xylulose-5-phosphate (DXP). The chain is 1-deoxy-D-xylulose-5-phosphate synthase from Blochmanniella pennsylvanica (strain BPEN).